A 318-amino-acid polypeptide reads, in one-letter code: N-acetyl-gamma-glutamyl-phosphate reductase (318 aa).

Cys-132 is a catalytic residue.

It belongs to the NAGSA dehydrogenase family. Type 1 subfamily.

Its subcellular location is the cytoplasm. It catalyses the reaction N-acetyl-L-glutamate 5-semialdehyde + phosphate + NADP(+) = N-acetyl-L-glutamyl 5-phosphate + NADPH + H(+). It functions in the pathway amino-acid biosynthesis; L-arginine biosynthesis; N(2)-acetyl-L-ornithine from L-glutamate: step 3/4. Catalyzes the NADPH-dependent reduction of N-acetyl-5-glutamyl phosphate to yield N-acetyl-L-glutamate 5-semialdehyde. This is N-acetyl-gamma-glutamyl-phosphate reductase from Azobacteroides pseudotrichonymphae genomovar. CFP2.